Here is a 289-residue protein sequence, read N- to C-terminus: Bifunctional protein FolD (289 aa).

NADP(+) contacts are provided by residues glycine 166–serine 168, serine 191, and isoleucine 232.

It belongs to the tetrahydrofolate dehydrogenase/cyclohydrolase family. In terms of assembly, homodimer.

The enzyme catalyses (6R)-5,10-methylene-5,6,7,8-tetrahydrofolate + NADP(+) = (6R)-5,10-methenyltetrahydrofolate + NADPH. It carries out the reaction (6R)-5,10-methenyltetrahydrofolate + H2O = (6R)-10-formyltetrahydrofolate + H(+). It participates in one-carbon metabolism; tetrahydrofolate interconversion. In terms of biological role, catalyzes the oxidation of 5,10-methylenetetrahydrofolate to 5,10-methenyltetrahydrofolate and then the hydrolysis of 5,10-methenyltetrahydrofolate to 10-formyltetrahydrofolate. In Synechococcus sp. (strain JA-3-3Ab) (Cyanobacteria bacterium Yellowstone A-Prime), this protein is Bifunctional protein FolD.